The following is a 394-amino-acid chain: Elongation factor Tu 2 (394 aa).

The region spanning 10 to 204 (KPHVNVGTIG…YLDTYIPEPE (195 aa)) is the tr-type G domain. Residues 19-26 (GHVDHGKT) form a G1 region. GTP is bound at residue 19–26 (GHVDHGKT). Threonine 26 is a binding site for Mg(2+). Residues 60–64 (GITIN) form a G2 region. A G3 region spans residues 81–84 (DCPG). Residues 81–85 (DCPGH) and 136–139 (NKCD) contribute to the GTP site. The G4 stretch occupies residues 136 to 139 (NKCD). The segment at 174 to 176 (SAL) is G5.

Belongs to the TRAFAC class translation factor GTPase superfamily. Classic translation factor GTPase family. EF-Tu/EF-1A subfamily. In terms of assembly, monomer.

The protein localises to the cytoplasm. The catalysed reaction is GTP + H2O = GDP + phosphate + H(+). Its function is as follows. GTP hydrolase that promotes the GTP-dependent binding of aminoacyl-tRNA to the A-site of ribosomes during protein biosynthesis. This Yersinia enterocolitica serotype O:8 / biotype 1B (strain NCTC 13174 / 8081) protein is Elongation factor Tu 2.